The following is a 490-amino-acid chain: Xylulose kinase (490 aa).

Residues His99, Arg170, Asp280, and Asn281 each contribute to the substrate site. ATP contacts are provided by residues Trp355, 441-442 (GA), and Asn445.

Belongs to the FGGY kinase family. Monomer.

The catalysed reaction is D-xylulose + ATP = D-xylulose 5-phosphate + ADP + H(+). Its function is as follows. Phosphorylates D-xylulose to produce D-xylulose 5-phosphate, a molecule that may play an important role in the regulation of glucose metabolism and lipogenesis. The chain is Xylulose kinase (XYLB) from Bos taurus (Bovine).